We begin with the raw amino-acid sequence, 242 residues long: Uridylate kinase (242 aa).

Position 8 to 11 (8 to 11 (KFSG)) interacts with ATP. Position 50 (G50) interacts with UMP. Positions 51 and 55 each coordinate ATP. Residues D71 and 132 to 139 (TGNPFFTT) contribute to the UMP site. ATP contacts are provided by T159, Y165, and D168.

Belongs to the UMP kinase family. As to quaternary structure, homohexamer.

The protein resides in the cytoplasm. The enzyme catalyses UMP + ATP = UDP + ADP. It participates in pyrimidine metabolism; CTP biosynthesis via de novo pathway; UDP from UMP (UMPK route): step 1/1. With respect to regulation, inhibited by UTP. Its function is as follows. Catalyzes the reversible phosphorylation of UMP to UDP. This Nitratiruptor sp. (strain SB155-2) protein is Uridylate kinase.